A 29-amino-acid polypeptide reads, in one-letter code: GICPRILMECKRDSDCLAQCVCKRQGYCG.

3 cysteine pairs are disulfide-bonded: Cys-3/Cys-20, Cys-10/Cys-22, and Cys-16/Cys-28.

The protein belongs to the protease inhibitor I7 (squash-type serine protease inhibitor) family.

The protein localises to the secreted. Inhibits trypsin. In Momordica repens, this protein is Trypsin inhibitor 1.